Here is a 284-residue protein sequence, read N- to C-terminus: Undecaprenyl-diphosphatase (284 aa).

Helical transmembrane passes span methionine 1 to valine 21, isoleucine 43 to tryptophan 63, tyrosine 88 to phenylalanine 108, leucine 116 to glycine 136, isoleucine 149 to glycine 169, leucine 193 to alanine 213, valine 225 to valine 245, and phenylalanine 259 to serine 279.

Belongs to the UppP family.

The protein resides in the cell membrane. It catalyses the reaction di-trans,octa-cis-undecaprenyl diphosphate + H2O = di-trans,octa-cis-undecaprenyl phosphate + phosphate + H(+). Functionally, catalyzes the dephosphorylation of undecaprenyl diphosphate (UPP). Confers resistance to bacitracin. In Cutibacterium acnes (strain DSM 16379 / KPA171202) (Propionibacterium acnes), this protein is Undecaprenyl-diphosphatase.